We begin with the raw amino-acid sequence, 372 residues long: tRNA-specific 2-thiouridylase MnmA (372 aa).

ATP is bound by residues 16–23 and M42; that span reads GMSGGVDS. Residues 102 to 104 form an interaction with target base in tRNA region; sequence NPD. C107 acts as the Nucleophile in catalysis. A disulfide bond links C107 and C205. G132 is a binding site for ATP. An interaction with tRNA region spans residues 155-157; that stretch reads KDQ. Catalysis depends on C205, which acts as the Cysteine persulfide intermediate. The segment at 317–318 is interaction with tRNA; that stretch reads RY.

Belongs to the MnmA/TRMU family.

The protein localises to the cytoplasm. It carries out the reaction S-sulfanyl-L-cysteinyl-[protein] + uridine(34) in tRNA + AH2 + ATP = 2-thiouridine(34) in tRNA + L-cysteinyl-[protein] + A + AMP + diphosphate + H(+). Catalyzes the 2-thiolation of uridine at the wobble position (U34) of tRNA, leading to the formation of s(2)U34. The protein is tRNA-specific 2-thiouridylase MnmA of Shewanella sp. (strain W3-18-1).